The primary structure comprises 370 residues: Pyrimidine monooxygenase RutA (370 aa).

FMN-binding positions include 49-50 (IK), N115, E124, 140-141 (RY), and S190.

It belongs to the NtaA/SnaA/DszA monooxygenase family. RutA subfamily.

The catalysed reaction is uracil + FMNH2 + NADH + O2 = (Z)-3-ureidoacrylate + FMN + NAD(+) + H2O + H(+). The enzyme catalyses thymine + FMNH2 + NADH + O2 = (Z)-2-methylureidoacrylate + FMN + NAD(+) + H2O + H(+). Catalyzes the pyrimidine ring opening between N-3 and C-4 by an unusual flavin hydroperoxide-catalyzed mechanism, adding oxygen atoms in the process to yield ureidoacrylate peracid, that immediately reacts with FMN forming ureidoacrylate and FMN-N(5)-oxide. The FMN-N(5)-oxide reacts spontaneously with NADH to produce FMN. Requires the flavin reductase RutF to regenerate FMN in vivo. In Variovorax paradoxus (strain S110), this protein is Pyrimidine monooxygenase RutA.